Here is a 545-residue protein sequence, read N- to C-terminus: ATP synthase subunit alpha (545 aa).

Position 173-180 (173-180 (GDRQTGKT)) interacts with ATP.

This sequence belongs to the ATPase alpha/beta chains family. As to quaternary structure, F-type ATPases have 2 components, CF(1) - the catalytic core - and CF(0) - the membrane proton channel. CF(1) has five subunits: alpha(3), beta(3), gamma(1), delta(1), epsilon(1). CF(0) has three main subunits: a(1), b(2) and c(9-12). The alpha and beta chains form an alternating ring which encloses part of the gamma chain. CF(1) is attached to CF(0) by a central stalk formed by the gamma and epsilon chains, while a peripheral stalk is formed by the delta and b chains.

The protein localises to the cell membrane. The enzyme catalyses ATP + H2O + 4 H(+)(in) = ADP + phosphate + 5 H(+)(out). Functionally, produces ATP from ADP in the presence of a proton gradient across the membrane. The alpha chain is a regulatory subunit. The sequence is that of ATP synthase subunit alpha from Leifsonia xyli subsp. xyli (strain CTCB07).